The following is a 302-amino-acid chain: tRNA dimethylallyltransferase 2 (302 aa).

Residue 6-13 (GPTACGKT) participates in ATP binding. 8–13 (TACGKT) is a binding site for substrate. 2 interaction with substrate tRNA regions span residues 31–34 (DSRQ) and 154–158 (QRAIR).

It belongs to the IPP transferase family. As to quaternary structure, monomer. Requires Mg(2+) as cofactor.

The catalysed reaction is adenosine(37) in tRNA + dimethylallyl diphosphate = N(6)-dimethylallyladenosine(37) in tRNA + diphosphate. Its function is as follows. Catalyzes the transfer of a dimethylallyl group onto the adenine at position 37 in tRNAs that read codons beginning with uridine, leading to the formation of N6-(dimethylallyl)adenosine (i(6)A). The polypeptide is tRNA dimethylallyltransferase 2 (Porphyromonas gingivalis (strain ATCC BAA-308 / W83)).